The sequence spans 703 residues: Polyribonucleotide nucleotidyltransferase (703 aa).

Mg(2+) is bound by residues Asp484 and Asp490. A KH domain is found at 551 to 610; it reads PQMIRMQIDPDKIREVIGPGGKTIHKIVDETGCKIDIEDDGSLFIMATDEEAAKKARFFV. Residues 620-694 form the S1 motif domain; that stretch reads GKTYMGTVKR…RQGRVNLSRK (75 aa).

The protein belongs to the polyribonucleotide nucleotidyltransferase family. Mg(2+) is required as a cofactor.

Its subcellular location is the cytoplasm. It carries out the reaction RNA(n+1) + phosphate = RNA(n) + a ribonucleoside 5'-diphosphate. In terms of biological role, involved in mRNA degradation. Catalyzes the phosphorolysis of single-stranded polyribonucleotides processively in the 3'- to 5'-direction. The polypeptide is Polyribonucleotide nucleotidyltransferase (Syntrophomonas wolfei subsp. wolfei (strain DSM 2245B / Goettingen)).